The primary structure comprises 201 residues: Ras-related protein Rab-9A (201 aa).

Ala-2 is subject to N-acetylalanine. 9 residues coordinate GTP: Gly-17, Val-18, Gly-19, Lys-20, Ser-21, Ser-22, Ser-34, His-38, and Thr-39. Residue Ser-21 participates in Mg(2+) binding. The short motif at 31–42 (KFDSQLFHTIGV) is the Switch 1 element. Ser-34 carries the phosphoserine modification. Mg(2+) contacts are provided by Thr-39 and Asp-62. The short motif at 64–78 (AGQERFRSLRTPFYR) is the Switch 2 element. Gly-65, Asn-124, Lys-125, Asp-127, and Lys-156 together coordinate GTP. Position 179 is a phosphoserine (Ser-179). Thr-187 is subject to Phosphothreonine. S-geranylgeranyl cysteine attachment occurs at residues Cys-200 and Cys-201.

It belongs to the small GTPase superfamily. Rab family. In terms of assembly, interacts (preferentially in its GTP-bound form) with GCC2 (via its GRIP domain). Interacts (GTP-bound form) with SGSM1; the GDP-bound form has much lower affinity for SGSM1. Interacts with SGSM2. The GTP-bound form but not the GDP-bound form interacts with HPS4 and the BLOC-3 complex (heterodimer of HPS1 and HPS4) but does not interact with HPS1 alone. Interacts (GTP-bound form) with NDE1; two RAB9A-GTP molecules lie on the opposite sides of the NDE1 homodimer; the interaction leads to RAB9A-dynein motor tethering. Interacts (GTP-bound form) with NDEL1. Mg(2+) serves as cofactor.

The protein resides in the cell membrane. Its subcellular location is the endoplasmic reticulum membrane. It localises to the golgi apparatus membrane. The protein localises to the late endosome. It is found in the cytoplasmic vesicle. The protein resides in the phagosome membrane. Its subcellular location is the phagosome. It localises to the cytoplasmic vesicle membrane. The protein localises to the melanosome. It catalyses the reaction GTP + H2O = GDP + phosphate + H(+). Regulated by guanine nucleotide exchange factors (GEFs) which promote the exchange of bound GDP for free GTP. Regulated by GTPase activating proteins (GAPs) which increase the GTP hydrolysis activity. Inhibited by GDP dissociation inhibitors (GDIs). Functionally, the small GTPases Rab are key regulators of intracellular membrane trafficking, from the formation of transport vesicles to their fusion with membranes. Rabs cycle between an inactive GDP-bound form and an active GTP-bound form that is able to recruit to membranes different sets of downstream effectors directly responsible for vesicle formation, movement, tethering and fusion. RAB9A is involved in the transport of proteins between the endosomes and the trans-Golgi network (TGN). Specifically uses NDE1/NDEL1 as an effector to interact with the dynein motor complex in order to control retrograde trafficking of RAB9-associated late endosomes to the TGN. Involved in the recruitment of SGSM2 to melanosomes and is required for the proper trafficking of melanogenic enzymes TYR, TYRP1 and DCT/TYRP2 to melanosomes in melanocytes. The protein is Ras-related protein Rab-9A of Rattus norvegicus (Rat).